A 572-amino-acid polypeptide reads, in one-letter code: Methionine--tRNA ligase (572 aa).

The short motif at 11 to 21 is the 'HIGH' region element; it reads PYINGIKHLGN. Residues cysteine 143, cysteine 146, cysteine 156, and cysteine 159 each contribute to the Zn(2+) site. The short motif at 346–350 is the 'KMSKS' region element; it reads QFSTS. An ATP-binding site is contributed by threonine 349.

It belongs to the class-I aminoacyl-tRNA synthetase family. MetG type 1 subfamily. Monomer. Zn(2+) serves as cofactor.

The protein resides in the cytoplasm. The catalysed reaction is tRNA(Met) + L-methionine + ATP = L-methionyl-tRNA(Met) + AMP + diphosphate. Is required not only for elongation of protein synthesis but also for the initiation of all mRNA translation through initiator tRNA(fMet) aminoacylation. The sequence is that of Methionine--tRNA ligase from Roseobacter denitrificans (strain ATCC 33942 / OCh 114) (Erythrobacter sp. (strain OCh 114)).